A 406-amino-acid polypeptide reads, in one-letter code: Pyruvate dehydrogenase E1 component subunit beta-2, chloroplastic (406 aa).

A chloroplast-targeting transit peptide spans 1-44 (MSSIIHGAGAATTTLSTFNSVDSKKLFVAPSRTNLSVRSQRYIV). A thiamine diphosphate-binding site is contributed by Glu142. Residues Val195, Ala243, Ile244, and Asn248 each coordinate K(+).

Tetramer of 2 alpha and 2 beta subunits. Thiamine diphosphate is required as a cofactor.

The protein localises to the plastid. Its subcellular location is the chloroplast. It carries out the reaction N(6)-[(R)-lipoyl]-L-lysyl-[protein] + pyruvate + H(+) = N(6)-[(R)-S(8)-acetyldihydrolipoyl]-L-lysyl-[protein] + CO2. The pyruvate dehydrogenase complex catalyzes the overall conversion of pyruvate to acetyl-CoA and CO(2). It contains multiple copies of three enzymatic components: pyruvate dehydrogenase (E1), dihydrolipoamide acetyltransferase (E2) and lipoamide dehydrogenase (E3). The chain is Pyruvate dehydrogenase E1 component subunit beta-2, chloroplastic (PDH-E1 BETA) from Arabidopsis thaliana (Mouse-ear cress).